The chain runs to 334 residues: Leukocyte cell-derived chemotaxin 1 (334 aa).

Residues 46–66 (VVLISGAVLLLFGAIGAFYFW) traverse the membrane as a helical segment. Positions 105 to 201 (GSGAEEAIEV…LCGDLPIFWL (97 aa)) constitute a BRICHOS domain. Cysteine 132 and cysteine 193 are joined by a disulfide. A propeptide spanning residues 211-214 (RERR) is cleaved from the precursor. Residues 212 to 270 (ERREVVRNSAPSTTRRPHSEPRGNAGPGRLSNGTRPNVQDDAEPFNPDNPYHQQEGESM) are disordered. An N-linked (GlcNAc...) asparagine glycan is attached at asparagine 243. Disulfide bonds link cysteine 282–cysteine 286, cysteine 283–cysteine 323, cysteine 293–cysteine 317, and cysteine 297–cysteine 313.

This sequence belongs to the chondromodulin-1 family. Post-translationally, after cleavage, the post-translationally modified ChM-I is secreted as a glycoprotein. Detected in the four cardiac valves, valvular interstitial cells and extracellular matrix (at protein level).

It is found in the secreted. The protein resides in the extracellular space. It localises to the extracellular matrix. The protein localises to the endomembrane system. Functionally, bifunctional growth regulator that stimulates the growth of cultured chondrocytes in the presence of basic fibroblast growth factor (FGF) but inhibits the growth of cultured vascular endothelial cells. May contribute to the rapid growth of cartilage and vascular invasion prior to the replacement of cartilage by bone during endochondral bone development. Inhibits in vitro tube formation and mobilization of endothelial cells. Plays a role as antiangiogenic factor in cardiac valves to suppress neovascularization. The chain is Leukocyte cell-derived chemotaxin 1 from Mus musculus (Mouse).